The primary structure comprises 754 residues: Deadenylation-dependent mRNA-decapping factor pdc2 (754 aa).

The interval 499–754 (LESIWKALYI…MGLDARQLSA (256 aa)) is interaction with lsm1.

This sequence belongs to the PAT1 family. Interacts with dcp2. Interacts with lsm1; via C-terminus.

It localises to the cytoplasm. The protein resides in the nucleus. Its subcellular location is the P-body. Functionally, activator of decapping that functions as a general and active mechanism of translational repression and required for P-body formation. Stabilizes the 3' terminus of mRNAs and modulates the rates of mRNA-decapping that occur following deadenylation. Might be required for promoting the formation or the stabilization of the preinitiation translation complexes. Necessary for accurate chromosome transmission during cell division. Together with lsm1, recruits the deadenylase ccr4 to P-bodies. In Schizosaccharomyces pombe (strain 972 / ATCC 24843) (Fission yeast), this protein is Deadenylation-dependent mRNA-decapping factor pdc2.